A 353-amino-acid chain; its full sequence is N6-methyladenosine RNA demethylase ALKB1 (353 aa).

A Fe2OG dioxygenase domain is found at 223 to 352 (IAQAAIVNFY…RINLNVRQMR (130 aa)). Fe cation is bound by residues histidine 241, aspartate 243, and histidine 308. Arginine 343 serves as a coordination point for 2-oxoglutarate.

The protein belongs to the alkB family. Fe(2+) serves as cofactor.

The protein localises to the cytoplasm. It localises to the P-body. The enzyme catalyses an N(6)-methyladenosine in mRNA + 2-oxoglutarate + O2 = an adenosine in mRNA + formaldehyde + succinate + CO2. RNA demethylase that regulates the stability of mRNAs through an m(6)A-dependent manner. M6A is a modification present at internal sites of mRNAs and some non-coding RNAs and plays a role in mRNA stability and processing. Plays a role in pathogenicity towards plant host. The sequence is that of N6-methyladenosine RNA demethylase ALKB1 from Pyricularia oryzae (strain 70-15 / ATCC MYA-4617 / FGSC 8958) (Rice blast fungus).